The following is a 403-amino-acid chain: G2/mitotic-specific cyclin-B3 (403 aa).

Disordered regions lie at residues Met-1–Ala-86 and Arg-102–Pro-122. Positions Ser-7–Glu-25 are enriched in polar residues. Residues Arg-51–Asn-59 carry the D-box motif.

The protein belongs to the cyclin family. Cyclin AB subfamily. As to quaternary structure, interacts with the CDK1 and CDK2 protein kinases. Ubiquitinated, leading to its degradation.

It is found in the nucleus. Functionally, cyclins are positive regulatory subunits of the cyclin-dependent kinases (CDKs), and thereby play an essential role in the control of the cell cycle, notably via their destruction during cell division. Could be involved at the G2/M (mitosis or meiosis) transition. G2/M cyclins accumulate steadily during G2 and are abruptly destroyed at mitosis. The chain is G2/mitotic-specific cyclin-B3 (CCNB3) from Gallus gallus (Chicken).